Consider the following 25-residue polypeptide: Insulin mimetic protein (25 aa).

Positions 1–25 are disordered; sequence TKDPELKQCKKQQKKQQQYDDDDKK.

In terms of processing, glycosylated. Expressed in seed.

In Cnidoscolus quercifolius, this protein is Insulin mimetic protein.